We begin with the raw amino-acid sequence, 285 residues long: Probable endonuclease 4 (285 aa).

His69, His109, Glu145, Asp179, His182, His216, Asp229, His231, and Glu261 together coordinate Zn(2+).

This sequence belongs to the AP endonuclease 2 family. Requires Zn(2+) as cofactor.

The enzyme catalyses Endonucleolytic cleavage to 5'-phosphooligonucleotide end-products.. In terms of biological role, endonuclease IV plays a role in DNA repair. It cleaves phosphodiester bonds at apurinic or apyrimidinic (AP) sites, generating a 3'-hydroxyl group and a 5'-terminal sugar phosphate. The sequence is that of Probable endonuclease 4 from Escherichia coli O127:H6 (strain E2348/69 / EPEC).